The following is a 62-amino-acid chain: uncharacterized protein (62 aa).

The helical transmembrane segment at 15-37 (FSSGVLISNFLLFNFIIISHSSL) threads the bilayer. Residues 41–56 (TTTTTTTTTTTTNTKS) show a composition bias toward low complexity. The segment at 41–62 (TTTTTTTTTTTTNTKSTLHRSG) is disordered.

It is found in the membrane. This is an uncharacterized protein from Dictyostelium discoideum (Social amoeba).